The primary structure comprises 610 residues: Aspartate--tRNA(Asp/Asn) ligase (610 aa).

Glutamate 182 lines the L-aspartate pocket. The segment at glutamine 206–lysine 209 is aspartate. Arginine 228 contacts L-aspartate. Residues arginine 228 to glutamate 230 and glutamine 237 each bind ATP. Histidine 470 is a binding site for L-aspartate. Residue glutamate 506 coordinates ATP. Arginine 513 lines the L-aspartate pocket. Position 558–561 (glycine 558–arginine 561) interacts with ATP.

Belongs to the class-II aminoacyl-tRNA synthetase family. Type 1 subfamily. As to quaternary structure, homodimer.

The protein resides in the cytoplasm. The catalysed reaction is tRNA(Asx) + L-aspartate + ATP = L-aspartyl-tRNA(Asx) + AMP + diphosphate. In terms of biological role, aspartyl-tRNA synthetase with relaxed tRNA specificity since it is able to aspartylate not only its cognate tRNA(Asp) but also tRNA(Asn). Reaction proceeds in two steps: L-aspartate is first activated by ATP to form Asp-AMP and then transferred to the acceptor end of tRNA(Asp/Asn). The sequence is that of Aspartate--tRNA(Asp/Asn) ligase from Acidobacterium capsulatum (strain ATCC 51196 / DSM 11244 / BCRC 80197 / JCM 7670 / NBRC 15755 / NCIMB 13165 / 161).